Consider the following 320-residue polypeptide: Malate dehydrogenase (320 aa).

NAD(+)-binding positions include 10–15 (GAGQIG) and aspartate 34. Substrate-binding residues include arginine 83 and arginine 89. NAD(+) is bound by residues asparagine 96 and 119–121 (ITN). 2 residues coordinate substrate: asparagine 121 and arginine 152. The Proton acceptor role is filled by histidine 176.

This sequence belongs to the LDH/MDH superfamily. MDH type 3 family.

The enzyme catalyses (S)-malate + NAD(+) = oxaloacetate + NADH + H(+). Its function is as follows. Catalyzes the reversible oxidation of malate to oxaloacetate. The chain is Malate dehydrogenase from Ruegeria pomeroyi (strain ATCC 700808 / DSM 15171 / DSS-3) (Silicibacter pomeroyi).